The primary structure comprises 427 residues: U1 small nuclear ribonucleoprotein 70 kDa (427 aa).

2 disordered regions span residues 82-102 and 215-427; these read EPGD…SQKR and RGRT…EYVR. Residues 93–102 show a composition bias toward basic and acidic residues; the sequence is PEVELPSQKR. Residues 138–216 enclose the RRM domain; that stretch reads KTLFVSRLNY…RRVLVDVERG (79 aa). The segment covering 227-241 has biased composition (gly residues); that stretch reads LGGGLGTSRVGGGEE. 2 stretches are compositionally biased toward basic and acidic residues: residues 257-402 and 409-427; these read EPSR…RYDK and RYER…EYVR. Serine 282 bears the Phosphoserine mark.

As to quaternary structure, component of the spliceosome. Interacts with CYP63, U2AF35A, U2AF35B, SRZ21, RSZ22, SR34, SR45, SR45A and SCL33. In terms of processing, phosphorylated. The association and dissociation with SR45 is not affected by the phosphorylation status. Ubiquitous.

It localises to the nucleus speckle. Its subcellular location is the nucleus. The protein localises to the nucleoplasm. Functionally, mediates the splicing of pre-mRNA by binding to the loop I region of U1-snRNA. In Arabidopsis thaliana (Mouse-ear cress), this protein is U1 small nuclear ribonucleoprotein 70 kDa (RNU1).